The primary structure comprises 61 residues: Mu-diguetoxin-Dc1c (61 aa).

3 disulfides stabilise this stretch: cysteine 12-cysteine 25, cysteine 19-cysteine 39, and cysteine 24-cysteine 53.

This sequence belongs to the neurotoxin 26 (DTX) family. Expressed by the venom gland.

It is found in the secreted. In terms of biological role, acts by delaying the inactivation of presynaptic voltage-sensitive sodium channels (Nav). Acts against insects and causes a progressive spastic paralysis. The polypeptide is Mu-diguetoxin-Dc1c (Diguetia canities (Desert bush spider)).